The chain runs to 670 residues: uncharacterized protein (670 aa).

The next 10 membrane-spanning stretches (helical) occupy residues 23 to 42, 47 to 69, 76 to 98, 118 to 140, 153 to 170, 381 to 403, 410 to 432, 437 to 454, 461 to 483, and 493 to 510; these read YALRNTIAMCLALTVAYYLN, YWAMTSAAVVSFPTVGGVISKSL, LLGAIAALLLAGHTLNEPWFFLL, VAYAFQLAGYTAAIIAFPMVNIT, VCEVIVGILCGGMMMMIL, QWDAGANALTLAAISCVLYSAVA, SLLMRTLVLLSLFSFVVKFGLMV, LWQFLLFLFPLLATMQLL, FAALWGQLIVFMGSFIAVTNPPV, and NLAKIVGVALAWLAFAIL.

Belongs to the aromatic acid exporter ArAE (TC 2.A.85) family.

Its subcellular location is the cell membrane. This is an uncharacterized protein from Escherichia coli (strain K12).